The following is a 175-amino-acid chain: Regenerating islet-derived protein 3-alpha (175 aa).

Residues 1–26 (MLPPMALPSVSWMLLSCLMLLSQVQG) form the signal peptide. The propeptide occupies 27 to 37 (EEPQRELPSAR). Cystine bridges form between C40–C51, C68–C171, and C146–C163. The C-type lectin domain occupies 47–172 (YGSHCYALFL…CNVRLPYVCK (126 aa)). H50 and H107 together coordinate Zn(2+). Residues 103–118 (WIGLHDPTQGTEPNGE) are sufficient to activate EXTL3. Residues 114–116 (EPN) carry the EPN motif. 2 residues coordinate Zn(2+): E121 and H145.

As to quaternary structure, forms a hexameric membrane-permeabilizing oligomeric pore on membrane phospholipids. The hexamer is formed by three dimers related by helical symmetry. Forms filaments, filamentation traps pore complexes and limits damage to host cells. Interacts with EXTL3. Post-translationally, proteolytic processing by trypsin removes an inhibitory N-terminal propeptide and is essential for peptidoglycan binding and antibacterial activity. Expressed by keratinocytes. Highly expressed in epidermal keratinocytes of psoriasis patients (at protein level). Constitutively expressed in intestine. Low expression is found in healthy pancreas. Overexpressed during the acute phase of pancreatitis and in some patients with chronic pancreatitis.

The protein resides in the secreted. Lipopolysaccharide inhibits pore-forming activity, explaining why is bactericidal for Gram-positive but not Gram-negative bacteria. Its function is as follows. Bactericidal C-type lectin which acts exclusively against Gram-positive bacteria and mediates bacterial killing by binding to surface-exposed carbohydrate moieties of peptidoglycan. Binds membrane phospholipids and kills bacteria by forming a hexameric membrane-permeabilizing oligomeric pore. Functionally, acts as a hormone in response to different stimuli like anti-inflammatory signals, such as IL17A, or gut microbiome. Secreted by different cell types to activate its receptor EXTL3 and induce cell specific signaling pathways. Induced by IL17A in keratinocytes, regulates keratinocyte proliferation and differentiation after skin injury via activation of EXTL3-PI3K-AKT signaling pathway. In parallel, inhibits skin inflammation through the inhibition of inflammatory cytokines such as IL6 and TNF. In pancreas, is able to permealize beta-cells membrane and stimulate their proliferation. Has bacteriostatic activity. The chain is Regenerating islet-derived protein 3-alpha from Homo sapiens (Human).